The chain runs to 1034 residues: Error-prone DNA polymerase (1034 aa).

The protein belongs to the DNA polymerase type-C family. DnaE2 subfamily.

Its subcellular location is the cytoplasm. The enzyme catalyses DNA(n) + a 2'-deoxyribonucleoside 5'-triphosphate = DNA(n+1) + diphosphate. In terms of biological role, DNA polymerase involved in damage-induced mutagenesis and translesion synthesis (TLS). It is not the major replicative DNA polymerase. The sequence is that of Error-prone DNA polymerase from Pseudomonas fluorescens (strain ATCC BAA-477 / NRRL B-23932 / Pf-5).